We begin with the raw amino-acid sequence, 532 residues long: Phosphoenolpyruvate carboxykinase (ATP) (532 aa).

Substrate is bound by residues Arg60, Tyr194, and Lys200. ATP-binding positions include Lys200, His219, and 237 to 245 (GLSGTGKTT). Residues Lys200 and His219 each contribute to the Mn(2+) site. A Mn(2+)-binding site is contributed by Asp258. Positions 286, 324, and 449 each coordinate ATP. Arg324 serves as a coordination point for substrate.

It belongs to the phosphoenolpyruvate carboxykinase (ATP) family. Requires Mn(2+) as cofactor.

It is found in the cytoplasm. The catalysed reaction is oxaloacetate + ATP = phosphoenolpyruvate + ADP + CO2. The protein operates within carbohydrate biosynthesis; gluconeogenesis. Functionally, involved in the gluconeogenesis. Catalyzes the conversion of oxaloacetate (OAA) to phosphoenolpyruvate (PEP) through direct phosphoryl transfer between the nucleoside triphosphate and OAA. This Cereibacter sphaeroides (strain ATCC 17029 / ATH 2.4.9) (Rhodobacter sphaeroides) protein is Phosphoenolpyruvate carboxykinase (ATP).